A 480-amino-acid chain; its full sequence is Heparin cofactor 2 (480 aa).

The first 19 residues, 1 to 19 (MQHRPHLLLISLTIMSVCG), serve as a signal peptide directing secretion. A glycan (N-linked (GlcNAc...) asparagine) is linked at Asn32. Repeat copies occupy residues 56–66 (GEEDDDYLDLE) and 70–80 (SEDDDYIDIID). Residues 56-80 (GEEDDDYLDLEKLLSEDDDYIDIID) form a 2 X 11 AA approximate repeats, Asp/Glu-rich (acidic) (hirudin-like) region. Tyr62 and Tyr75 each carry sulfotyrosine. Residue Asn169 is glycosylated (N-linked (GlcNAc...) asparagine). The interval 173-193 (KYEILTIHNLFRKLTHRLFRR) is glycosaminoglycan-binding site. Asn368 and Asn404 each carry an N-linked (GlcNAc...) asparagine glycan.

Belongs to the serpin family. In terms of processing, N-glycosylated; different glycan composition appears to lead to two forms of this protein (56 and 60 kDa).

In terms of biological role, thrombin inhibitor activated by the glycosaminoglycans, heparin or dermatan sulfate. In the presence of the latter, HC-II becomes the predominant thrombin inhibitor in place of antithrombin III (AT). This chain is Heparin cofactor 2 (SERPIND1), found in Oryctolagus cuniculus (Rabbit).